Reading from the N-terminus, the 50-residue chain is Large ribosomal subunit protein bL33 (50 aa).

It belongs to the bacterial ribosomal protein bL33 family.

The protein is Large ribosomal subunit protein bL33 of Endomicrobium trichonymphae.